Here is a 447-residue protein sequence, read N- to C-terminus: GTPase Der (447 aa).

2 consecutive EngA-type G domains span residues 3–167 (PVIA…FAQR) and 181–354 (IRLA…AAAM). GTP is bound by residues 9–16 (GRPNVGKS), 56–60 (DTGGF), 119–122 (NKAE), 187–194 (GRPNVGKS), 234–238 (DTAGI), and 299–302 (NKWD). One can recognise a KH-like domain in the interval 355 to 439 (SNLSTPKLTR…PLRIELRSGK (85 aa)).

Belongs to the TRAFAC class TrmE-Era-EngA-EngB-Septin-like GTPase superfamily. EngA (Der) GTPase family. Associates with the 50S ribosomal subunit.

Functionally, GTPase that plays an essential role in the late steps of ribosome biogenesis. The chain is GTPase Der from Herminiimonas arsenicoxydans.